Consider the following 1000-residue polypeptide: Isoleucine--tRNA ligase, mitochondrial (1000 aa).

Residues 1-27 constitute a mitochondrion transit peptide; that stretch reads MLGAWRAAPRLRLRARFGVASVWARSA. The short motif at 102 to 112 is the 'HIGH' region element; sequence PYANGDPHVGH. The ATP site is built by K649 and K652. A 'KMSKS' region motif is present at residues 649-653; it reads KMSKS.

It belongs to the class-I aminoacyl-tRNA synthetase family.

The protein localises to the mitochondrion matrix. It catalyses the reaction tRNA(Ile) + L-isoleucine + ATP = L-isoleucyl-tRNA(Ile) + AMP + diphosphate. Its function is as follows. Aminoacyl-tRNA synthetase that catalyzes the specific attachment of isoleucine to its cognate tRNA (tRNA(Ile)). In Gallus gallus (Chicken), this protein is Isoleucine--tRNA ligase, mitochondrial (IARS2).